A 15639-amino-acid chain; its full sequence is FR901469 synthetase (15639 aa).

In terms of domain architecture, Carrier 1 spans 5–81; that stretch reads HTSDGLRKLL…DLVDKIIEQQ (77 aa). Serine 42 is subject to O-(pantetheine 4'-phosphoryl)serine. Acidic residues predominate over residues 82-94; sequence LEEEEEDDDSLDN. Residues 82-105 are disordered; sequence LEEEEEDDDSLDNESERDHSQKDL. The segment at 140 to 553 is condensation 1; sequence PCLSMQEGCL…RDFLPLTEDD (414 aa). The tract at residues 579–971 is adenylation 1; sequence TISKQPDAVA…LGRRDTQVKI (393 aa). The 77-residue stretch at 1108-1184 folds into the Carrier 2 domain; that stretch reads TPATAIEKEL…ELALVARSTT (77 aa). An O-(pantetheine 4'-phosphoryl)serine modification is found at serine 1145. An epimerase 1 region spans residues 1219 to 1626; it reads RSSNRFNQSV…TITHLVKRLA (408 aa). Residues 1667-2097 are condensation 2; that stretch reads EDVLPCTPIQ…LGNLSLLTNN (431 aa). An adenylation 2 region spans residues 2122-2518; sequence QEAAKEYTNA…GRRDNQIKIR (397 aa). Residues 2654 to 2730 enclose the Carrier 3 domain; that stretch reads VPATALEKQL…ELALKAKSTT (77 aa). O-(pantetheine 4'-phosphoryl)serine is present on serine 2691. Positions 2761 to 3176 are epimerase 2; that stretch reads VSAGEHRYNQ…TELLHRLEQM (416 aa). Residues 3215-3640 are condensation 3; sequence QDIYPCSPTQ…DDLIMMSPED (426 aa). The adenylation 3 stretch occupies residues 3669-4059; that stretch reads TQPHAPAVAA…MGRIDSQIKI (391 aa). The Carrier 4 domain occupies 4193–4269; the sequence is PPSNDAERMV…QLAAIVTQRG (77 aa). Position 4230 is an O-(pantetheine 4'-phosphoryl)serine (serine 4230). The tract at residues 4316–4714 is condensation 4; the sequence is EDVYPCTPLQ…ILAHGTGLEE (399 aa). The adenylation 4 stretch occupies residues 4756-5149; the sequence is TEAASTRPDA…GRLDTQAKLR (394 aa). Residues 5284–5360 form the Carrier 5 domain; that stretch reads EPATIMERQL…DLASHIDHHT (77 aa). An O-(pantetheine 4'-phosphoryl)serine modification is found at serine 5321. A condensation 5 region spans residues 5402-5802; that stretch reads EDIYPCTPLQ…TVFAQLCDSS (401 aa). An adenylation 5 region spans residues 5847–6238; sequence KYPNEPAVHA…LGRRDSQMKV (392 aa). The Carrier 6 domain maps to 6375–6451; sequence QPSTTAEIKL…DMAKIVEEHV (77 aa). The residue at position 6412 (serine 6412) is an O-(pantetheine 4'-phosphoryl)serine. Positions 6494–6889 are condensation 6; sequence EDVYPATPLQ…RFAKVYQQLS (396 aa). An adenylation 6 region spans residues 6952 to 7335; that stretch reads WDGSMTYAEL…GRRDTQIKIR (384 aa). Positions 7473 to 7546 constitute a Carrier 7 domain; the sequence is TAMEEQLRTV…QLALLASTDE (74 aa). Serine 7507 is modified (O-(pantetheine 4'-phosphoryl)serine). The tract at residues 7580–7992 is epimerase 3; the sequence is MGENRYNQSV…SKTLEELTTQ (413 aa). The interval 8034-8459 is condensation 7; it reads EDVFPASPMQ…QRMRNISLAS (426 aa). The adenylation 7 stretch occupies residues 8486-8882; sequence QKSVHARPDA…GRRDTQVKIR (397 aa). One can recognise a Carrier 8 domain in the interval 9015-9091; it reads QPATDAERQL…DLAKTIQDSE (77 aa). Serine 9052 is subject to O-(pantetheine 4'-phosphoryl)serine. The condensation 8 stretch occupies residues 9136–9535; it reads EDVYPCTPLQ…FAAIFRQLCD (400 aa). An adenylation 8 region spans residues 9583-9974; that stretch reads KNPHAIAVNA…GRRDNQMKIR (392 aa). Residues 10110 to 10186 enclose the Carrier 9 domain; sequence EPATPMEMQL…GLAALIQKQI (77 aa). Position 10147 is an O-(pantetheine 4'-phosphoryl)serine (serine 10147). The segment at 10186 to 10208 is disordered; that stretch reads IDEEEEYDDSEEEEEDDEEEVRE. Over residues 10187–10206 the composition is skewed to acidic residues; the sequence is DEEEEYDDSEEEEEDDEEEV. A condensation 9 region spans residues 10240–10662; it reads VEDVYPCTPL…VLSETDKTKI (423 aa). An adenylation 9 region spans residues 10683–11082; the sequence is KQAIERPNAP…GRRDTQIKIR (400 aa). The 77-residue stretch at 11217-11293 folds into the Carrier 10 domain; the sequence is EPATGMERHL…DLARETESQG (77 aa). An O-(pantetheine 4'-phosphoryl)serine modification is found at serine 11254. A condensation 10 region spans residues 11329–11725; the sequence is EDVYPCTPLQ…ETIFQQLSSV (397 aa). Positions 11770 to 12165 are adenylation 10; that stretch reads FKRTADKQPE…GRRDTQIKVR (396 aa). Residues 12298–12374 enclose the Carrier 11 domain; it reads EPSTEMERRI…DLAAAVQGRI (77 aa). Residue serine 12335 is modified to O-(pantetheine 4'-phosphoryl)serine. The tract at residues 12418 to 12830 is condensation 11; it reads EDVYPATPLQ…IQDIEMVSEQ (413 aa). Residues 12861-13249 form an adenylation 11 region; sequence SRADEIAICA…GRRDTQIKIR (389 aa). One can recognise a Carrier 12 domain in the interval 13383–13459; that stretch reads MPGTVQEEQL…QLGQKVKEAV (77 aa). O-(pantetheine 4'-phosphoryl)serine is present on serine 13420. Residues 13476 to 13901 are epimerase 4; it reads APIQQMFFEQ…LKDMTSTLLQ (426 aa). Positions 13940 to 14369 are condensation 12; sequence EDILPCSPIQ…SIVGEHDLQQ (430 aa). Positions 14390 to 14789 are adenylation 12; it reads RDAAHRTPDA…GRGDGQIKIR (400 aa). In terms of domain architecture, Carrier 13 spans 14916-14992; that stretch reads LPASADEGAL…DMASVASAAR (77 aa). O-(pantetheine 4'-phosphoryl)serine is present on serine 14953. The interval 15062-15433 is condensation 13; the sequence is QHAVDLAALK…DIMVRLASQQ (372 aa). Disordered stretches follow at residues 15434–15511 and 15617–15639; these read EGTV…ENRQ and VQTN…KGHI. The span at 15455 to 15472 shows a compositional bias: low complexity; sequence NGTNGSNGDGTDAANGIG. Positions 15482 to 15494 are enriched in basic and acidic residues; sequence AVEKSSGDAEVEK. The span at 15495 to 15511 shows a compositional bias: polar residues; the sequence is VSTNGHADNNTSAENRQ.

The protein belongs to the NRP synthetase family.

Its pathway is antifungal biosynthesis. In terms of biological role, nonribosomal peptide synthetase; part of the gene cluster that mediates the biosynthesis of the antifungal antibiotic FR901469, an inhibitor of beta-1,3-glucansynthase, exerting antifungal activity against the pathogenes Candida albicans and Aspergillus fumigatus. FR901469 is a cyclic depsipeptide containing 12 amino acid residues and a fatty acid chain. The NRPS frbI contains 12 modules responsible for the formation of the depsipeptide backbone which is denoted as Acyl-Thr-Ala-Tyr-Val-4OHPro-Thr-Thr-3OHPro-threo3OHGln-Gly-Thr-Orn-OH (C71H116N14O23). The PKS frbB is probably involved in the production of the hydrocarbon chain, and the acyl-CoA ligase frbC might be involved in the transport of the chain to the peptide ptoduct of frbI. Because FR901469 contains 3 hydroxylated amino acid residues, the 3 oxygenases frbA, frbH, and frbJ might be participating in amino acid hydroxylation. As no thioesterase domains were detected in frbI or frbB, the thioesterases frbD and frbE may instead release and cyclize the products of the NRPS and PKS, respectively. The chain is FR901469 synthetase from Dothideomycetidae sp. (strain 11243) (Fungal sp. (strain No.11243)).